A 400-amino-acid chain; its full sequence is Probable phospho-2-dehydro-3-deoxyheptonate aldolase (400 aa).

This sequence belongs to the class-II DAHP synthase family.

It carries out the reaction D-erythrose 4-phosphate + phosphoenolpyruvate + H2O = 7-phospho-2-dehydro-3-deoxy-D-arabino-heptonate + phosphate. It participates in antibiotic biosynthesis; phenazine biosynthesis. This chain is Probable phospho-2-dehydro-3-deoxyheptonate aldolase (phzC), found in Pseudomonas fluorescens.